Reading from the N-terminus, the 615-residue chain is Aldehyde oxidase GLOX1 (615 aa).

The N-terminal stretch at 1–25 is a signal peptide; the sequence is MKKSTRLLWLLSIIVLVAAVSKAVA. A glycan (N-linked (GlcNAc...) asparagine) is linked at N35. The interval 70 to 89 is disordered; it reads PPKAGKGKGKGKGRGTVAAG. The segment covering 72 to 82 has biased composition (basic residues); it reads KAGKGKGKGKG. N187 and N297 each carry an N-linked (GlcNAc...) asparagine glycan.

It localises to the secreted. It carries out the reaction an aldehyde + O2 + H2O = a carboxylate + H2O2 + H(+). In terms of biological role, catalyzes the oxidation of aldehydes to the corresponding carboxylate by coupling the reaction to the reduction of dioxygen to hydrogen peroxide. Substrates include glyoxal and other aldehydes. May be regulated by the transcription factor MYB80 during anther development and play a role in tapetum and pollen development. This Arabidopsis thaliana (Mouse-ear cress) protein is Aldehyde oxidase GLOX1.